We begin with the raw amino-acid sequence, 263 residues long: Acyl-[acyl-carrier-protein]--UDP-N-acetylglucosamine O-acyltransferase (263 aa).

Belongs to the transferase hexapeptide repeat family. LpxA subfamily. Homotrimer.

It is found in the cytoplasm. It catalyses the reaction a (3R)-hydroxyacyl-[ACP] + UDP-N-acetyl-alpha-D-glucosamine = a UDP-3-O-[(3R)-3-hydroxyacyl]-N-acetyl-alpha-D-glucosamine + holo-[ACP]. It participates in glycolipid biosynthesis; lipid IV(A) biosynthesis; lipid IV(A) from (3R)-3-hydroxytetradecanoyl-[acyl-carrier-protein] and UDP-N-acetyl-alpha-D-glucosamine: step 1/6. In terms of biological role, involved in the biosynthesis of lipid A, a phosphorylated glycolipid that anchors the lipopolysaccharide to the outer membrane of the cell. The protein is Acyl-[acyl-carrier-protein]--UDP-N-acetylglucosamine O-acyltransferase of Xanthomonas euvesicatoria pv. vesicatoria (strain 85-10) (Xanthomonas campestris pv. vesicatoria).